Reading from the N-terminus, the 499-residue chain is Putative hydrolase YuaR (499 aa).

Positions 1-26 (MRVIMKPLRRTLVFFIFSVFLCGTVS) are cleaved as a signal peptide. The region spanning 94-393 (GSVIIISGGP…DAFPAVNFER (300 aa)) is the AB hydrolase-1 domain. S207 serves as the catalytic Nucleophile. The active site involves D433. The active-site Proton donor is H460.

This sequence belongs to the peptidase S33 family.

The chain is Putative hydrolase YuaR (yuaR) from Escherichia coli (strain K12).